The sequence spans 425 residues: D-amino acid dehydrogenase 2 (425 aa).

Residue 3-17 participates in FAD binding; sequence ITVVGAGIVGISTAY.

Belongs to the DadA oxidoreductase family. FAD serves as cofactor.

The enzyme catalyses a D-alpha-amino acid + A + H2O = a 2-oxocarboxylate + AH2 + NH4(+). In terms of biological role, oxidative deamination of D-amino acids. This chain is D-amino acid dehydrogenase 2 (dadA2), found in Ralstonia nicotianae (strain ATCC BAA-1114 / GMI1000) (Ralstonia solanacearum).